The following is a 322-amino-acid chain: GTP 3',8-cyclase (322 aa).

In terms of domain architecture, Radical SAM core spans 5–233; it reads KYGRVVDYLR…NAPASIYRLD (229 aa). Residue Arg14 participates in GTP binding. [4Fe-4S] cluster contacts are provided by Cys21 and Cys25. Residue Tyr27 participates in S-adenosyl-L-methionine binding. A [4Fe-4S] cluster-binding site is contributed by Cys28. Arg64 serves as a coordination point for GTP. Gly68 provides a ligand contact to S-adenosyl-L-methionine. Residue Thr95 participates in GTP binding. Ser119 is a binding site for S-adenosyl-L-methionine. Lys155 is a GTP binding site. Residue Met189 coordinates S-adenosyl-L-methionine. The [4Fe-4S] cluster site is built by Cys249 and Cys252. 254–256 is a GTP binding site; the sequence is RIR. [4Fe-4S] cluster is bound at residue Cys266.

The protein belongs to the radical SAM superfamily. MoaA family. In terms of assembly, monomer and homodimer. The cofactor is [4Fe-4S] cluster.

The catalysed reaction is GTP + AH2 + S-adenosyl-L-methionine = (8S)-3',8-cyclo-7,8-dihydroguanosine 5'-triphosphate + 5'-deoxyadenosine + L-methionine + A + H(+). It participates in cofactor biosynthesis; molybdopterin biosynthesis. Functionally, catalyzes the cyclization of GTP to (8S)-3',8-cyclo-7,8-dihydroguanosine 5'-triphosphate. This is GTP 3',8-cyclase from Campylobacter curvus (strain 525.92).